A 115-amino-acid polypeptide reads, in one-letter code: Somatostatin-2 (115 aa).

An N-terminal signal peptide occupies residues 1–18; the sequence is MKVCRIHCALALLGLALA. Positions 19–87 are excised as a propeptide; sequence ICSQGAASQP…KEDLRVELER (69 aa). Cysteine 104 and cysteine 115 are oxidised to a cystine.

It belongs to the somatostatin family.

It is found in the secreted. Its function is as follows. Somatostatin inhibits the release of somatotropin. This Oncorhynchus mykiss (Rainbow trout) protein is Somatostatin-2 (sst2).